The following is a 255-amino-acid chain: Acetylglutamate kinase (255 aa).

Substrate contacts are provided by residues 40-41 (GG), Arg-62, and Asn-153.

It belongs to the acetylglutamate kinase family. ArgB subfamily.

It is found in the cytoplasm. The enzyme catalyses N-acetyl-L-glutamate + ATP = N-acetyl-L-glutamyl 5-phosphate + ADP. It participates in amino-acid biosynthesis; L-arginine biosynthesis; N(2)-acetyl-L-ornithine from L-glutamate: step 2/4. Catalyzes the ATP-dependent phosphorylation of N-acetyl-L-glutamate. This chain is Acetylglutamate kinase, found in Bacillus cereus (strain AH187).